A 745-amino-acid polypeptide reads, in one-letter code: MERPPGLRPGAGGPWEMRERLGTGGFGNVCLYQHRELDLKIAIKSCRLELSTKNRERWCHEIQIMKKLNHANVVKACDVPEELNILIHDVPLLAMEYCSGGDLRKLLNKPENCCGLKESQILSLLSDIGSGIRYLHENKIIHRDLKPENIVLQDVGGKIIHKIIDLGYAKDVDQGSLCTSFVGTLQYLAPELFENKPYTATVDYWSFGTMVFECIAGYRPFLHHLQPFTWHEKIKKKDPKCIFACEEMSGEVRFSSHLPQPNSLCSLVVEPMENWLQLMLNWDPQQRGGPVDLTLKQPRCFVLMDHILNLKIVHILNMTSAKIISFLLPPDESLHSLQSRIERETGINTGSQELLSETGISLDPRKPASQCVLDGVRGCDSYMVYLFDKSKTVYEGPFASRSLSDCVNYIVQDSKIQLPIIQLRKVWAEAVHYVSGLKEDYSRLFQGQRAAMLSLLRYNANLTKMKNTLISASQQLKAKLEFFHKSIQLDLERYSEQMTYGISSEKMLKAWKEMEEKAIHYAEVGVIGYLEDQIMSLHAEIMELQKSPYGRRQGDLMESLEQRAIDLYKQLKHRPSDHSYSDSTEMVKIIVHTVQSQDRVLKELFGHLSKLLGCKQKIIDLLPKVEVALSNIKEADNTVMFMQGKRQKEIWHLLKIACTQSSARSLVGSSLEGAVTPQTSAWLPPTSAEHDHSLSCVVTPQDGETSAQMIEENLNCLGHLSTIIHEANEEQGNSMMNLDWSWLTE.

The Protein kinase domain maps to 15-302 (WEMRERLGTG…LTLKQPRCFV (288 aa)). ATP is bound by residues 21-29 (LGTGGFGNV) and Lys44. At Thr23 the chain carries Phosphothreonine; by PKB/AKT1 and SGK1. Asp144 functions as the Proton acceptor in the catalytic mechanism. The residue at position 176 (Ser176) is a Phosphoserine; by MAP3K14. Thr179 is modified ((Microbial infection) O-acetylthreonine; by Yersinia YopJ). Ser180 bears the Phosphoserine; by SGK1 mark. Residues 455–476 (LLRYNANLTKMKNTLISASQQL) are leucine-zipper. The NEMO-binding stretch occupies residues 738-743 (LDWSWL).

The protein belongs to the protein kinase superfamily. Ser/Thr protein kinase family. I-kappa-B kinase subfamily. As to quaternary structure, component of the I-kappa-B-kinase (IKK) core complex consisting of CHUK, IKBKB and IKBKG; probably four alpha/CHUK-beta/IKBKB dimers are associated with four gamma/IKBKG subunits. The IKK core complex seems to associate with regulatory or adapter proteins to form a IKK-signalosome holo-complex. The IKK complex associates with TERF2IP/RAP1, leading to promote IKK-mediated phosphorylation of RELA/p65. Part of a complex composed of NCOA2, NCOA3, CHUK/IKKA, IKBKB, IKBKG and CREBBP. Part of a 70-90 kDa complex at least consisting of CHUK/IKKA, IKBKB, NFKBIA, RELA, ELP1 and MAP3K14. Directly interacts with TRPC4AP. May interact with TRAF2. Interacts with NALP2. May interact with MAVS/IPS1. Interacts with ARRB1 and ARRB2. Interacts with NLRC5; prevents CHUK phosphorylation and kinase activity. Interacts with PIAS1; this interaction induces PIAS1 phosphorylation. Interacts with ZNF268 isoform 2; the interaction is further increased in a TNF-alpha-dependent manner. Interacts with FOXO3. Interacts with IFIT5; the interaction synergizes the recruitment of IKK to MAP3K7 and enhances IKK phosphorylation. Interacts with LRRC14. Interacts with SASH1. Directly interacts with DDX3X after the physiological activation of the TLR7 and TLR8 pathways; this interaction enhances CHUK autophosphorylation. In terms of assembly, (Microbial infection) Interacts with InlC of Listeria monocytogenes. Phosphorylated by MAP3K14/NIK, AKT and to a lesser extent by MEKK1, and dephosphorylated by PP2A. Autophosphorylated. Post-translationally, ubiquitinated by TRIM56 via 'Lys-63'-linked ubiquitination, promoting activation of CHUK/IKKA. In terms of processing, (Microbial infection) Acetylation of Thr-179 by Yersinia YopJ prevents phosphorylation and activation, thus blocking the I-kappa-B signaling pathway. Widely expressed.

The protein localises to the cytoplasm. Its subcellular location is the nucleus. The catalysed reaction is L-seryl-[I-kappa-B protein] + ATP = O-phospho-L-seryl-[I-kappa-B protein] + ADP + H(+). Its activity is regulated as follows. Activated when phosphorylated and inactivated when dephosphorylated. Serine kinase that plays an essential role in the NF-kappa-B signaling pathway which is activated by multiple stimuli such as inflammatory cytokines, bacterial or viral products, DNA damages or other cellular stresses. Acts as a part of the canonical IKK complex in the conventional pathway of NF-kappa-B activation and phosphorylates inhibitors of NF-kappa-B on serine residues. These modifications allow polyubiquitination of the inhibitors and subsequent degradation by the proteasome. In turn, free NF-kappa-B is translocated into the nucleus and activates the transcription of hundreds of genes involved in immune response, growth control, or protection against apoptosis. Negatively regulates the pathway by phosphorylating the scaffold protein TAXBP1 and thus promoting the assembly of the A20/TNFAIP3 ubiquitin-editing complex (composed of A20/TNFAIP3, TAX1BP1, and the E3 ligases ITCH and RNF11). Therefore, CHUK plays a key role in the negative feedback of NF-kappa-B canonical signaling to limit inflammatory gene activation. As part of the non-canonical pathway of NF-kappa-B activation, the MAP3K14-activated CHUK/IKKA homodimer phosphorylates NFKB2/p100 associated with RelB, inducing its proteolytic processing to NFKB2/p52 and the formation of NF-kappa-B RelB-p52 complexes. In turn, these complexes regulate genes encoding molecules involved in B-cell survival and lymphoid organogenesis. Also participates in the negative feedback of the non-canonical NF-kappa-B signaling pathway by phosphorylating and destabilizing MAP3K14/NIK. Within the nucleus, phosphorylates CREBBP and consequently increases both its transcriptional and histone acetyltransferase activities. Modulates chromatin accessibility at NF-kappa-B-responsive promoters by phosphorylating histones H3 at 'Ser-10' that are subsequently acetylated at 'Lys-14' by CREBBP. Additionally, phosphorylates the CREBBP-interacting protein NCOA3. Also phosphorylates FOXO3 and may regulate this pro-apoptotic transcription factor. Phosphorylates RIPK1 at 'Ser-25' which represses its kinase activity and consequently prevents TNF-mediated RIPK1-dependent cell death. Phosphorylates AMBRA1 following mitophagy induction, promoting AMBRA1 interaction with ATG8 family proteins and its mitophagic activity. This chain is Inhibitor of nuclear factor kappa-B kinase subunit alpha (CHUK), found in Homo sapiens (Human).